The chain runs to 392 residues: NADH-quinone oxidoreductase subunit D (392 aa).

Belongs to the complex I 49 kDa subunit family. In terms of assembly, NDH-1 is composed of 14 different subunits. Subunits NuoB, C, D, E, F, and G constitute the peripheral sector of the complex.

It localises to the cell inner membrane. The enzyme catalyses a quinone + NADH + 5 H(+)(in) = a quinol + NAD(+) + 4 H(+)(out). NDH-1 shuttles electrons from NADH, via FMN and iron-sulfur (Fe-S) centers, to quinones in the respiratory chain. The immediate electron acceptor for the enzyme in this species is believed to be ubiquinone. Couples the redox reaction to proton translocation (for every two electrons transferred, four hydrogen ions are translocated across the cytoplasmic membrane), and thus conserves the redox energy in a proton gradient. The protein is NADH-quinone oxidoreductase subunit D of Parvibaculum lavamentivorans (strain DS-1 / DSM 13023 / NCIMB 13966).